Consider the following 267-residue polypeptide: Hydroxynaphthalene reductase-like protein Arp2 (267 aa).

4 residues coordinate NADP(+): I25, N45, D71, and N98. Catalysis depends on proton donor residues S147 and S148. Positions 162, 166, 195, and 197 each coordinate NADP(+). The Proton acceptor role is filled by Y162. Residue K166 is the Lowers pKa of active site Tyr of the active site.

Belongs to the short-chain dehydrogenases/reductases (SDR) family.

Hydroxynaphthalene reductase-like protein; part of the Pks2 gene cluster that mediates the formation of infectious structures (appressoria), enabling these fungi to kill insects faster. The product of the Pks2 gene cluster is different from the one of Pks1 and has still not been identified. The sequence is that of Hydroxynaphthalene reductase-like protein Arp2 from Metarhizium robertsii (strain ARSEF 23 / ATCC MYA-3075) (Metarhizium anisopliae (strain ARSEF 23)).